The following is a 634-amino-acid chain: Growth hormone receptor (634 aa).

The N-terminal stretch at methionine 1–alanine 18 is a signal peptide. Residues phenylalanine 19–glutamine 260 are Extracellular-facing. Asparagine 46 is a glycosylation site (N-linked (GlcNAc...) asparagine). A disulfide bridge connects residues cysteine 56 and cysteine 66. An N-linked (GlcNAc...) asparagine glycan is attached at asparagine 73. Cysteine 97 and cysteine 108 are joined by a disulfide. Asparagine 111 carries N-linked (GlcNAc...) asparagine glycosylation. A disulfide bridge links cysteine 122 with cysteine 136. The region spanning proline 147 to methionine 250 is the Fibronectin type-III domain. 3 N-linked (GlcNAc...) asparagine glycosylation sites follow: asparagine 152, asparagine 157, and asparagine 196. Residues tyrosine 236–serine 240 carry the WSXWS motif motif. Residues phenylalanine 261–serine 284 traverse the membrane as a helical segment. The Cytoplasmic portion of the chain corresponds to lysine 285–proline 634. The segment at lysine 290–alanine 375 is required for JAK2 binding. The Box 1 motif signature appears at isoleucine 293 to lysine 301. Positions aspartate 336–aspartate 345 match the UbE motif motif. Position 337 is a phosphoserine (serine 337). Positions lysine 451–leucine 471 are disordered. Polar residues predominate over residues threonine 460–leucine 471. Phosphotyrosine is present on residues tyrosine 483 and tyrosine 591.

Belongs to the type I cytokine receptor family. Type 1 subfamily. As to quaternary structure, on growth hormone (GH) binding, forms homodimers and binds JAK2 via a box 1-containing domain. Post-translationally, the soluble form (GHBP) is produced by phorbol ester-promoted proteolytic cleavage at the cell surface (shedding) by ADAM17/TACE. Shedding is inhibited by growth hormone (GH) binding to the receptor probably due to a conformational change in GHR rendering the receptor inaccessible to ADAM17. On GH binding, phosphorylated on tyrosine residues in the cytoplasmic domain by JAK2. In terms of processing, ubiquitinated by the ECS(SOCS2) complex following ligand-binding and phosphorylation by JAK2, leading to its degradation by the proteasome. Regulation by the ECS(SOCS2) complex acts as a negative feedback loop of growth hormone receptor signaling. Ubiquitination is not sufficient for GHR internalization.

It is found in the cell membrane. The protein resides in the secreted. Functionally, receptor for pituitary gland growth hormone (GH1) involved in regulating postnatal body growth. On ligand binding, couples to the JAK2/STAT5 pathway. In terms of biological role, the soluble form (GHBP) acts as a reservoir of growth hormone in plasma and may be a modulator/inhibitor of GH signaling. The protein is Growth hormone receptor (GHR) of Ovis aries (Sheep).